The sequence spans 129 residues: MAEKPTAKPKAAEAKDQSDSYAIVEASGQQFLLQPNRYYDLDRLQAAVDDTVTLEKVLLIKDGKNDATVGQPYVKGASVELKVMDHRRGPKIIVYKMRPKKKTRRKNGHRQELTRVMVQSISIDGKALS.

This sequence belongs to the bacterial ribosomal protein bL21 family. In terms of assembly, part of the 50S ribosomal subunit. Contacts protein L20.

Functionally, this protein binds to 23S rRNA in the presence of protein L20. In Prochlorococcus marinus (strain MIT 9313), this protein is Large ribosomal subunit protein bL21.